The sequence spans 213 residues: Large ribosomal subunit protein uL1 (213 aa).

Belongs to the universal ribosomal protein uL1 family. As to quaternary structure, part of the 50S ribosomal subunit.

Its function is as follows. Binds directly to 23S rRNA. Probably involved in E site tRNA release. Protein L1 is also a translational repressor protein, it controls the translation of its operon by binding to its mRNA. In Methanococcus voltae, this protein is Large ribosomal subunit protein uL1.